The following is a 947-amino-acid chain: Bifunctional glutamine synthetase adenylyltransferase/adenylyl-removing enzyme (947 aa).

An adenylyl removase region spans residues 1–440 (MTPLSSPLRQ…VFNELIGDDE (440 aa)). The segment at 450 to 947 (SEPWREVWQD…ASWRKWLVAV (498 aa)) is adenylyl transferase.

Belongs to the GlnE family. It depends on Mg(2+) as a cofactor.

The catalysed reaction is [glutamine synthetase]-O(4)-(5'-adenylyl)-L-tyrosine + phosphate = [glutamine synthetase]-L-tyrosine + ADP. The enzyme catalyses [glutamine synthetase]-L-tyrosine + ATP = [glutamine synthetase]-O(4)-(5'-adenylyl)-L-tyrosine + diphosphate. Its function is as follows. Involved in the regulation of glutamine synthetase GlnA, a key enzyme in the process to assimilate ammonia. When cellular nitrogen levels are high, the C-terminal adenylyl transferase (AT) inactivates GlnA by covalent transfer of an adenylyl group from ATP to specific tyrosine residue of GlnA, thus reducing its activity. Conversely, when nitrogen levels are low, the N-terminal adenylyl removase (AR) activates GlnA by removing the adenylyl group by phosphorolysis, increasing its activity. The regulatory region of GlnE binds the signal transduction protein PII (GlnB) which indicates the nitrogen status of the cell. In Salmonella arizonae (strain ATCC BAA-731 / CDC346-86 / RSK2980), this protein is Bifunctional glutamine synthetase adenylyltransferase/adenylyl-removing enzyme.